We begin with the raw amino-acid sequence, 160 residues long: uncharacterized protein (160 aa).

This is an uncharacterized protein from Methanocaldococcus jannaschii (strain ATCC 43067 / DSM 2661 / JAL-1 / JCM 10045 / NBRC 100440) (Methanococcus jannaschii).